A 307-amino-acid polypeptide reads, in one-letter code: Exosome complex component RRP45A (307 aa).

It belongs to the RNase PH family. As to expression, expressed in roots, leaves, stems, buds and siliques.

The protein localises to the cytoplasm. The protein resides in the nucleus. Functionally, probable 3'-&gt;5' exoribonuclease involved in the regulation of cuticular wax biosynthesis. Can perform exosomal functions and partially complement the yeast rrp45 null mutant. The protein is Exosome complex component RRP45A of Arabidopsis thaliana (Mouse-ear cress).